The following is a 125-amino-acid chain: UPF0102 protein ABO_0585 (125 aa).

Belongs to the UPF0102 family.

The chain is UPF0102 protein ABO_0585 from Alcanivorax borkumensis (strain ATCC 700651 / DSM 11573 / NCIMB 13689 / SK2).